The chain runs to 292 residues: uncharacterized protein (292 aa).

Residues 13–35 form a helical membrane-spanning segment; that stretch reads LFILFIIVVCIYLLPRVAINAFY.

The protein belongs to the serine esterase family.

It is found in the membrane. This is an uncharacterized protein from Salmonella typhimurium (strain LT2 / SGSC1412 / ATCC 700720).